The primary structure comprises 264 residues: uncharacterized protein (264 aa).

The next 3 helical transmembrane spans lie at Leu48–Phe68, Ile112–Ala132, and Leu142–Ile162. Ser260 is modified (phosphoserine).

It localises to the membrane. This is an uncharacterized protein from Schizosaccharomyces pombe (strain 972 / ATCC 24843) (Fission yeast).